Reading from the N-terminus, the 452-residue chain is Putrescine hydroxycinnamoyltransferase (452 aa).

Histidine 151 acts as the Proton acceptor in catalysis. The interval 213-234 is disordered; it reads PAAGVDGDVGGDHKQQHGHGGE. Residues 222–234 are compositionally biased toward basic and acidic residues; sequence GGDHKQQHGHGGE. The active-site Proton acceptor is the aspartate 398.

This sequence belongs to the plant acyltransferase family. Highly expressed in roots. Expressed at low levels in flowers.

Its function is as follows. Hydroxycinnamoyl transferase that catalyzes the transfer of an acyl from p-coumaryol-CoA to putrescine, to produce coumaroyl putrescine. Can use feruloyl-CoA, caffeoyl-CoA and sinapoyl-CoA as acyl donors. Seems to be able to transfer the acyl group from feruloyl-CoA to the acyl acceptors agmatine and spermidine. The polypeptide is Putrescine hydroxycinnamoyltransferase (Oryza sativa subsp. japonica (Rice)).